Reading from the N-terminus, the 362-residue chain is 3-dehydroquinate synthase (362 aa).

NAD(+) is bound by residues 71–76 (DGEQYK), 105–109 (GVVGD), 129–130 (TT), Lys142, Lys151, and 169–172 (CLKT). 3 residues coordinate Zn(2+): Glu184, His247, and His264.

It belongs to the sugar phosphate cyclases superfamily. Dehydroquinate synthase family. It depends on Co(2+) as a cofactor. Requires Zn(2+) as cofactor. NAD(+) serves as cofactor.

The protein resides in the cytoplasm. The catalysed reaction is 7-phospho-2-dehydro-3-deoxy-D-arabino-heptonate = 3-dehydroquinate + phosphate. It participates in metabolic intermediate biosynthesis; chorismate biosynthesis; chorismate from D-erythrose 4-phosphate and phosphoenolpyruvate: step 2/7. In terms of biological role, catalyzes the conversion of 3-deoxy-D-arabino-heptulosonate 7-phosphate (DAHP) to dehydroquinate (DHQ). In Shigella flexneri serotype 5b (strain 8401), this protein is 3-dehydroquinate synthase.